A 54-amino-acid polypeptide reads, in one-letter code: Conotoxin Cal6.17 (54 aa).

Positions methionine 1–threonine 19 are cleaved as a signal peptide. 3 disulfide bridges follow: cysteine 24–cysteine 39, cysteine 32–cysteine 49, and cysteine 38–cysteine 53.

As to expression, expressed by the venom duct.

The protein localises to the secreted. Functionally, probable neurotoxin. This chain is Conotoxin Cal6.17, found in Californiconus californicus (California cone).